A 250-amino-acid chain; its full sequence is 5-oxoprolinase subunit A 2 (250 aa).

This sequence belongs to the LamB/PxpA family. In terms of assembly, forms a complex composed of PxpA, PxpB and PxpC.

The enzyme catalyses 5-oxo-L-proline + ATP + 2 H2O = L-glutamate + ADP + phosphate + H(+). Catalyzes the cleavage of 5-oxoproline to form L-glutamate coupled to the hydrolysis of ATP to ADP and inorganic phosphate. The protein is 5-oxoprolinase subunit A 2 of Bordetella bronchiseptica (strain ATCC BAA-588 / NCTC 13252 / RB50) (Alcaligenes bronchisepticus).